Consider the following 402-residue polypeptide: Protein HAIKU1 (402 aa).

4 disordered regions span residues 1-44, 63-135, 160-266, and 346-402; these read MDRP…LQTQ, TGSP…QQPM, SSLG…LVPS, and QPLT…WNDY. Residues 24–44 are compositionally biased toward polar residues; it reads LHQSTFAASTSNGAAPRLQTQ. A VQ motif is present at residues 55–64; that stretch reads FRSIVQQLTG. Residues 76–87 show a composition bias toward polar residues; sequence QNNSLRPQNTRL. Residues 103-113 show a composition bias toward pro residues; sequence VPLPSMAPPQS. Polar residues predominate over residues 160 to 173; it reads SSLGDSGPNANQMQ. Positions 218-240 are enriched in low complexity; it reads MPAQSQSQSQPQPQPQPQQHMMP. Residues 257-266 show a composition bias toward pro residues; it reads YLPPPGLVPS. Positions 349-358 are enriched in polar residues; it reads TPNFSFSQIA. Over residues 371-380 the composition is skewed to pro residues; sequence QGPPQPPPSP. Over residues 381–390 the composition is skewed to low complexity; that stretch reads GLMFPLSPSG.

In terms of assembly, interacts with WRKY10. Interacts with MPK6.

Its subcellular location is the nucleus. Modulates seed size by negatively regulating the cellularization of syncytial endosperm. May function by binding and modulating the activity of WRKY10 transcription factor. The polypeptide is Protein HAIKU1 (Arabidopsis thaliana (Mouse-ear cress)).